The chain runs to 422 residues: Serine hydroxymethyltransferase (422 aa).

Residue 121 to 123 (GHI) coordinates (6S)-5,6,7,8-tetrahydrofolate. At lysine 227 the chain carries N6-(pyridoxal phosphate)lysine. Glutamate 245 is a (6S)-5,6,7,8-tetrahydrofolate binding site.

This sequence belongs to the SHMT family. As to quaternary structure, homodimer. Pyridoxal 5'-phosphate is required as a cofactor.

The protein localises to the cytoplasm. It catalyses the reaction 5,10-methylenetetrahydromethanopterin + glycine + H2O = 5,6,7,8-tetrahydromethanopterin + L-serine. The protein operates within amino-acid biosynthesis; glycine biosynthesis; glycine from L-serine: step 1/1. Catalyzes the reversible interconversion of serine and glycine with tetrahydromethanopterin (H4MPT) serving as the one-carbon carrier. Also exhibits a pteridine-independent aldolase activity toward beta-hydroxyamino acids, producing glycine and aldehydes, via a retro-aldol mechanism. The sequence is that of Serine hydroxymethyltransferase from Methanobrevibacter smithii (strain ATCC 35061 / DSM 861 / OCM 144 / PS).